Consider the following 514-residue polypeptide: Proline--tRNA ligase (514 aa).

The protein belongs to the class-II aminoacyl-tRNA synthetase family. ProS type 3 subfamily. As to quaternary structure, homodimer.

Its subcellular location is the cytoplasm. It catalyses the reaction tRNA(Pro) + L-proline + ATP = L-prolyl-tRNA(Pro) + AMP + diphosphate. Its function is as follows. Catalyzes the attachment of proline to tRNA(Pro) in a two-step reaction: proline is first activated by ATP to form Pro-AMP and then transferred to the acceptor end of tRNA(Pro). This Erythrobacter litoralis (strain HTCC2594) protein is Proline--tRNA ligase.